The primary structure comprises 372 residues: Lipoyl synthase, mitochondrial (372 aa).

Residues 1–27 (MSLRCGGAVRTVGPRVFGRYVFSPVRE) constitute a mitochondrion transit peptide. 7 residues coordinate [4Fe-4S] cluster: Cys106, Cys111, Cys117, Cys137, Cys141, Cys144, and Ser352. Residues 122–341 (EYATATATIM…EKVGNELGFH (220 aa)) form the Radical SAM core domain.

It belongs to the radical SAM superfamily. Lipoyl synthase family. [4Fe-4S] cluster serves as cofactor.

Its subcellular location is the mitochondrion. The catalysed reaction is [[Fe-S] cluster scaffold protein carrying a second [4Fe-4S](2+) cluster] + N(6)-octanoyl-L-lysyl-[protein] + 2 oxidized [2Fe-2S]-[ferredoxin] + 2 S-adenosyl-L-methionine + 4 H(+) = [[Fe-S] cluster scaffold protein] + N(6)-[(R)-dihydrolipoyl]-L-lysyl-[protein] + 4 Fe(3+) + 2 hydrogen sulfide + 2 5'-deoxyadenosine + 2 L-methionine + 2 reduced [2Fe-2S]-[ferredoxin]. Its pathway is protein modification; protein lipoylation via endogenous pathway; protein N(6)-(lipoyl)lysine from octanoyl-[acyl-carrier-protein]: step 2/2. Functionally, catalyzes the radical-mediated insertion of two sulfur atoms into the C-6 and C-8 positions of the octanoyl moiety bound to the lipoyl domains of lipoate-dependent enzymes, thereby converting the octanoylated domains into lipoylated derivatives. The polypeptide is Lipoyl synthase, mitochondrial (Bos taurus (Bovine)).